A 298-amino-acid chain; its full sequence is Probable GTP 3',8-cyclase (298 aa).

The 227-residue stretch at 4-230 (KFGREIRSLR…RKKYIVDGLE (227 aa)) folds into the Radical SAM core domain. Arginine 13 is a GTP binding site. [4Fe-4S] cluster-binding residues include cysteine 20 and cysteine 24. Tyrosine 26 contacts S-adenosyl-L-methionine. Cysteine 27 contributes to the [4Fe-4S] cluster binding site. Position 61 (lysine 61) interacts with GTP. Position 65 (glycine 65) interacts with S-adenosyl-L-methionine. Threonine 91 is a GTP binding site. Serine 115 is a binding site for S-adenosyl-L-methionine. Lysine 152 provides a ligand contact to GTP. Positions 243 and 246 each coordinate [4Fe-4S] cluster. 248–250 (RIR) provides a ligand contact to GTP. Residue cysteine 260 coordinates [4Fe-4S] cluster.

Belongs to the radical SAM superfamily. MoaA family. [4Fe-4S] cluster is required as a cofactor.

It carries out the reaction GTP + AH2 + S-adenosyl-L-methionine = (8S)-3',8-cyclo-7,8-dihydroguanosine 5'-triphosphate + 5'-deoxyadenosine + L-methionine + A + H(+). It participates in cofactor biosynthesis; molybdopterin biosynthesis. Functionally, catalyzes the cyclization of GTP to (8S)-3',8-cyclo-7,8-dihydroguanosine 5'-triphosphate. This chain is Probable GTP 3',8-cyclase, found in Methanocaldococcus jannaschii (strain ATCC 43067 / DSM 2661 / JAL-1 / JCM 10045 / NBRC 100440) (Methanococcus jannaschii).